Reading from the N-terminus, the 325-residue chain is uncharacterized protein (325 aa).

Residues M1–S69 constitute a chloroplast transit peptide. A70 carries the N-acetylalanine modification.

The protein belongs to the NAD(P)-dependent epimerase/dehydratase family.

The protein resides in the plastid. It is found in the chloroplast. This is an uncharacterized protein from Arabidopsis thaliana (Mouse-ear cress).